The chain runs to 309 residues: Histidine protein methyltransferase 1 homolog (309 aa).

Disordered stretches follow at residues Met-1–Ser-37 and Lys-79–Asp-111. Residues Glu-25–Ser-37 show a composition bias toward basic and acidic residues. Low complexity predominate over residues Asn-84–Asn-109. Residues Leu-132–Ser-136, Gly-159, Gln-179–Tyr-181, Gly-209–Trp-211, and Ser-229 each bind S-adenosyl-L-methionine.

Belongs to the methyltransferase superfamily. METTL18 family.

The protein resides in the cytoplasm. Its subcellular location is the cytosol. It localises to the nucleus. It is found in the nucleolus. It catalyses the reaction L-histidyl-[protein] + S-adenosyl-L-methionine = N(tele)-methyl-L-histidyl-[protein] + S-adenosyl-L-homocysteine + H(+). Its function is as follows. Protein-L-histidine N-tele-methyltransferase that probably monomethylates RPL3. Through the methylation of RPL3 may regulate the dynamics of pre-rRNA processing, ribosome biogenesis, and translation. The chain is Histidine protein methyltransferase 1 homolog from Dictyostelium discoideum (Social amoeba).